Consider the following 413-residue polypeptide: Probable tRNA sulfurtransferase (413 aa).

The THUMP domain maps to 61–171 (TRVLDRVTRV…EDGTYIFTEK (111 aa)). Residues 189 to 190 (ML), 214 to 215 (HF), Arg275, Gly297, and Gln306 each bind ATP.

The protein belongs to the ThiI family.

Its subcellular location is the cytoplasm. The catalysed reaction is [ThiI sulfur-carrier protein]-S-sulfanyl-L-cysteine + a uridine in tRNA + 2 reduced [2Fe-2S]-[ferredoxin] + ATP + H(+) = [ThiI sulfur-carrier protein]-L-cysteine + a 4-thiouridine in tRNA + 2 oxidized [2Fe-2S]-[ferredoxin] + AMP + diphosphate. The enzyme catalyses [ThiS sulfur-carrier protein]-C-terminal Gly-Gly-AMP + S-sulfanyl-L-cysteinyl-[cysteine desulfurase] + AH2 = [ThiS sulfur-carrier protein]-C-terminal-Gly-aminoethanethioate + L-cysteinyl-[cysteine desulfurase] + A + AMP + 2 H(+). Its pathway is cofactor biosynthesis; thiamine diphosphate biosynthesis. Functionally, catalyzes the ATP-dependent transfer of a sulfur to tRNA to produce 4-thiouridine in position 8 of tRNAs, which functions as a near-UV photosensor. Also catalyzes the transfer of sulfur to the sulfur carrier protein ThiS, forming ThiS-thiocarboxylate. This is a step in the synthesis of thiazole, in the thiamine biosynthesis pathway. The sulfur is donated as persulfide by IscS. The polypeptide is Probable tRNA sulfurtransferase (Natranaerobius thermophilus (strain ATCC BAA-1301 / DSM 18059 / JW/NM-WN-LF)).